A 501-amino-acid polypeptide reads, in one-letter code: Glucose-6-phosphate isomerase (501 aa).

Residues 78 to 101 (GIANPTENRAAEHSAERGDGAPES) form a disordered region. Residues 86–97 (RAAEHSAERGDG) show a composition bias toward basic and acidic residues. The Proton donor role is filled by E333. Residues H364 and K474 contribute to the active site.

Belongs to the GPI family.

It is found in the cytoplasm. The enzyme catalyses alpha-D-glucose 6-phosphate = beta-D-fructose 6-phosphate. The protein operates within carbohydrate biosynthesis; gluconeogenesis. Its pathway is carbohydrate degradation; glycolysis; D-glyceraldehyde 3-phosphate and glycerone phosphate from D-glucose: step 2/4. In terms of biological role, catalyzes the reversible isomerization of glucose-6-phosphate to fructose-6-phosphate. This chain is Glucose-6-phosphate isomerase, found in Sphingopyxis alaskensis (strain DSM 13593 / LMG 18877 / RB2256) (Sphingomonas alaskensis).